Here is a 509-residue protein sequence, read N- to C-terminus: 2,3-bisphosphoglycerate-independent phosphoglycerate mutase (509 aa).

The Mn(2+) site is built by Asp12 and Ser62. Ser62 acts as the Phosphoserine intermediate in catalysis. Residues His123, 153–154 (RD), Arg185, Arg191, 260–263 (RPDR), and Lys333 contribute to the substrate site. Mn(2+)-binding residues include Asp400, His404, Asp441, His442, and His460.

It belongs to the BPG-independent phosphoglycerate mutase family. As to quaternary structure, monomer. It depends on Mn(2+) as a cofactor.

The enzyme catalyses (2R)-2-phosphoglycerate = (2R)-3-phosphoglycerate. It functions in the pathway carbohydrate degradation; glycolysis; pyruvate from D-glyceraldehyde 3-phosphate: step 3/5. Functionally, catalyzes the interconversion of 2-phosphoglycerate and 3-phosphoglycerate. This is 2,3-bisphosphoglycerate-independent phosphoglycerate mutase from Clostridium kluyveri (strain ATCC 8527 / DSM 555 / NBRC 12016 / NCIMB 10680 / K1).